A 110-amino-acid chain; its full sequence is Large ribosomal subunit protein uL22 (110 aa).

This sequence belongs to the universal ribosomal protein uL22 family. As to quaternary structure, part of the 50S ribosomal subunit.

Functionally, this protein binds specifically to 23S rRNA; its binding is stimulated by other ribosomal proteins, e.g. L4, L17, and L20. It is important during the early stages of 50S assembly. It makes multiple contacts with different domains of the 23S rRNA in the assembled 50S subunit and ribosome. The globular domain of the protein is located near the polypeptide exit tunnel on the outside of the subunit, while an extended beta-hairpin is found that lines the wall of the exit tunnel in the center of the 70S ribosome. This chain is Large ribosomal subunit protein uL22, found in Nitrosococcus oceani (strain ATCC 19707 / BCRC 17464 / JCM 30415 / NCIMB 11848 / C-107).